Consider the following 371-residue polypeptide: Queuine tRNA-ribosyltransferase (371 aa).

The active-site Proton acceptor is the Asp-90. Substrate contacts are provided by residues Asp-90–Phe-94, Asp-144, Gln-189, and Gly-215. An RNA binding region spans residues Gly-246–Asn-252. The active-site Nucleophile is Asp-265. Residues Thr-270–Arg-274 are RNA binding; important for wobble base 34 recognition. Zn(2+)-binding residues include Cys-303, Cys-305, Cys-308, and His-334.

It belongs to the queuine tRNA-ribosyltransferase family. Homodimer. Within each dimer, one monomer is responsible for RNA recognition and catalysis, while the other monomer binds to the replacement base PreQ1. Zn(2+) serves as cofactor.

The catalysed reaction is 7-aminomethyl-7-carbaguanine + guanosine(34) in tRNA = 7-aminomethyl-7-carbaguanosine(34) in tRNA + guanine. Its pathway is tRNA modification; tRNA-queuosine biosynthesis. In terms of biological role, catalyzes the base-exchange of a guanine (G) residue with the queuine precursor 7-aminomethyl-7-deazaguanine (PreQ1) at position 34 (anticodon wobble position) in tRNAs with GU(N) anticodons (tRNA-Asp, -Asn, -His and -Tyr). Catalysis occurs through a double-displacement mechanism. The nucleophile active site attacks the C1' of nucleotide 34 to detach the guanine base from the RNA, forming a covalent enzyme-RNA intermediate. The proton acceptor active site deprotonates the incoming PreQ1, allowing a nucleophilic attack on the C1' of the ribose to form the product. After dissociation, two additional enzymatic reactions on the tRNA convert PreQ1 to queuine (Q), resulting in the hypermodified nucleoside queuosine (7-(((4,5-cis-dihydroxy-2-cyclopenten-1-yl)amino)methyl)-7-deazaguanosine). This is Queuine tRNA-ribosyltransferase from Helicobacter pylori (strain P12).